The following is a 132-amino-acid chain: Sec-independent protein translocase protein TatB (132 aa).

Residues 1–21 form a helical membrane-spanning segment; it reads MFDIGFWELVLISVVGLVVLG. Residues 70 to 132 are disordered; that stretch reads GMEDLSPELK…KVSAADKKAE (63 aa). Basic and acidic residues-rich tracts occupy residues 96–108 and 115–132; these read YADK…ETAK and SAEK…KKAE.

This sequence belongs to the TatB family. As to quaternary structure, the Tat system comprises two distinct complexes: a TatABC complex, containing multiple copies of TatA, TatB and TatC subunits, and a separate TatA complex, containing only TatA subunits. Substrates initially bind to the TatABC complex, which probably triggers association of the separate TatA complex to form the active translocon.

Its subcellular location is the cell inner membrane. Its function is as follows. Part of the twin-arginine translocation (Tat) system that transports large folded proteins containing a characteristic twin-arginine motif in their signal peptide across membranes. Together with TatC, TatB is part of a receptor directly interacting with Tat signal peptides. TatB may form an oligomeric binding site that transiently accommodates folded Tat precursor proteins before their translocation. This Vibrio parahaemolyticus serotype O3:K6 (strain RIMD 2210633) protein is Sec-independent protein translocase protein TatB.